The chain runs to 171 residues: MSDYKVNEATIAKKAELVDVYAQKMTEAASIVVADSRGLSVDQDTQLRKQLREAGVEFKVVKNSVLRRAAEKAGLEGLSEAFSGPSAVAFSNEDVVAPAKVLADFAKDAENLEIKAGVIEGKVSSKEEIQAIASLPSRDGLLSMLLSVLQAPVRNVALAVKAVAEKEESAA.

This sequence belongs to the universal ribosomal protein uL10 family. In terms of assembly, part of the ribosomal stalk of the 50S ribosomal subunit. The N-terminus interacts with L11 and the large rRNA to form the base of the stalk. The C-terminus forms an elongated spine to which L12 dimers bind in a sequential fashion forming a multimeric L10(L12)X complex.

Its function is as follows. Forms part of the ribosomal stalk, playing a central role in the interaction of the ribosome with GTP-bound translation factors. This Lactococcus lactis subsp. lactis (strain IL1403) (Streptococcus lactis) protein is Large ribosomal subunit protein uL10 (rplJ).